We begin with the raw amino-acid sequence, 342 residues long: MTSDETLAVLIRYLDNPNPTVEEAVEVFTPMTIGEYDDVHIAALLATIRTRGETFADIAGAAKAFLNAGRPFPVPGTGVLDTAGTGGDGANTINITTGASLVAAAGGLKVVKHGNRSVSSKSGSADVLEALNIPLDLDPERAQRWFEASNFTFLFAPAYNPAIAHAQPVRKALKVPTIFNVLGPLLSPVRPEFQIMGVANPRHGQMLTEVFRELGRTRALVVHGAGTDEIAVHGTTQVWELKADGEIISYEITPEELGVERCDLTDLVGGDGVENARHMRAIFDGTGPAAHRNAVAVNAGAMFYLNSQADSLREGTAHALSLINDGTVADWLKTHEEIDYRG.

5-phospho-alpha-D-ribose 1-diphosphate contacts are provided by residues Gly-84, 87-88 (GD), Thr-92, 94-97 (NITT), 112-120 (KHGNRSVSS), and Ser-124. Anthranilate is bound at residue Gly-84. Residue Thr-96 coordinates Mg(2+). Asn-115 contributes to the anthranilate binding site. Residue Arg-170 coordinates anthranilate. Asp-228 and Glu-229 together coordinate Mg(2+).

The protein belongs to the anthranilate phosphoribosyltransferase family. As to quaternary structure, homodimer. Mg(2+) serves as cofactor.

It catalyses the reaction N-(5-phospho-beta-D-ribosyl)anthranilate + diphosphate = 5-phospho-alpha-D-ribose 1-diphosphate + anthranilate. It participates in amino-acid biosynthesis; L-tryptophan biosynthesis; L-tryptophan from chorismate: step 2/5. In terms of biological role, catalyzes the transfer of the phosphoribosyl group of 5-phosphorylribose-1-pyrophosphate (PRPP) to anthranilate to yield N-(5'-phosphoribosyl)-anthranilate (PRA). In Corynebacterium efficiens (strain DSM 44549 / YS-314 / AJ 12310 / JCM 11189 / NBRC 100395), this protein is Anthranilate phosphoribosyltransferase.